Consider the following 176-residue polypeptide: ELVDVEGEDVVNGGTYYMLPGIEGDGGGMEGAKTGRETCPITVVQSRNDVSNGEPITIESPFRSYFIPKGSLVRIGFTSPPKCAPSPWWTLALDRPQGLSVKLGEYESTEFNYSFKFEDVSSKLHSYKLSYCVREEWYEDYICKNIGIYRDSKGYRRLVVNEENPLVVVLKKVESS.

Intrachain disulfides connect Cys-39/Cys-83 and Cys-132/Cys-143.

This sequence belongs to the protease inhibitor I3 (leguminous Kunitz-type inhibitor) family.

In terms of biological role, inhibits trypsin stoichiometrically. The sequence is that of Trypsin inhibitor 1B from Erythrina variegata (Indian coral tree).